The chain runs to 546 residues: Glutathione reductase (546 aa).

Residues 2 to 46 constitute an apicoplast transit peptide; sequence YKHRYFHFFFFFFFFLVSTKIIRSFTFLNNNTNLSNPVYFKKKAN. Residues Ser58 and Gly59 each contribute to the FAD site. Ser58 lines the glutathione pocket. Arg65 provides a ligand contact to glutathione. Positions 78, 85, 86, and 94 each coordinate FAD. Cys86 and Cys91 are disulfide-bonded. Tyr141 serves as a coordination point for glutathione. Residue Ala157 participates in FAD binding. The NADP(+) site is built by Ile233, Glu236, Arg253, Arg259, and Gly318. FAD contacts are provided by Asp358 and Thr400. Arg408 provides a ligand contact to glutathione. Val430 is an NADP(+) binding site. Residue His531 participates in FAD binding. His531 serves as the catalytic Proton acceptor.

The protein belongs to the class-I pyridine nucleotide-disulfide oxidoreductase family. In terms of assembly, homodimer. The cofactor is FAD.

It localises to the cytoplasm. The protein localises to the plastid. Its subcellular location is the apicoplast. The enzyme catalyses 2 glutathione + NADP(+) = glutathione disulfide + NADPH + H(+). Catalyzes the reduction of glutathione disulfide (GSSG) to reduced glutathione (GSH). Constitutes the major mechanism to maintain a high GSH:GSSG ratio in the cytosol. The polypeptide is Glutathione reductase (Plasmodium falciparum (isolate 3D7)).